A 374-amino-acid polypeptide reads, in one-letter code: Cytochrome b (374 aa).

The next 4 helical transmembrane spans lie at 25–45, 69–90, 105–125, and 170–190; these read FGSM…FLAI, WIIQ…YMHI, WLSG…GYVL, and FFAL…IHII. Residues histidine 75 and histidine 89 each contribute to the heme b site. Residues histidine 174 and histidine 188 each coordinate heme b. Histidine 193 lines the a ubiquinone pocket. The next 4 membrane-spanning stretches (helical) occupy residues 218 to 238, 280 to 300, 312 to 332, and 339 to 358; these read YKDM…LSFT, LGGA…PFTH, LAQI…WTAT, and FITI…MINP.

The protein belongs to the cytochrome b family. In terms of assembly, the cytochrome bc1 complex contains 3 respiratory subunits (MT-CYB, CYC1 and UQCRFS1), 2 core proteins (UQCRC1 and UQCRC2) and probably 6 low-molecular weight proteins. It depends on heme b as a cofactor.

The protein localises to the mitochondrion inner membrane. Functionally, component of the ubiquinol-cytochrome c reductase complex (complex III or cytochrome b-c1 complex) that is part of the mitochondrial respiratory chain. The b-c1 complex mediates electron transfer from ubiquinol to cytochrome c. Contributes to the generation of a proton gradient across the mitochondrial membrane that is then used for ATP synthesis. The polypeptide is Cytochrome b (MT-CYB) (Calliophis bivirgatus (Blue Malaysian coral snake)).